The primary structure comprises 74 residues: MSNKEDIIKMEGTIVEALPNAMFRVELENGHKILAHISGKMRKNFIRLVPGDKVVVELTIYDLTKGRIVYRKKS.

Positions 1 to 73 (MSNKEDIIKM…TKGRIVYRKK (73 aa)) constitute an S1-like domain.

This sequence belongs to the IF-1 family. In terms of assembly, component of the 30S ribosomal translation pre-initiation complex which assembles on the 30S ribosome in the order IF-2 and IF-3, IF-1 and N-formylmethionyl-tRNA(fMet); mRNA recruitment can occur at any time during PIC assembly.

The protein resides in the cytoplasm. Its function is as follows. One of the essential components for the initiation of protein synthesis. Stabilizes the binding of IF-2 and IF-3 on the 30S subunit to which N-formylmethionyl-tRNA(fMet) subsequently binds. Helps modulate mRNA selection, yielding the 30S pre-initiation complex (PIC). Upon addition of the 50S ribosomal subunit IF-1, IF-2 and IF-3 are released leaving the mature 70S translation initiation complex. The polypeptide is Translation initiation factor IF-1 (Thermosipho melanesiensis (strain DSM 12029 / CIP 104789 / BI429)).